A 182-amino-acid chain; its full sequence is Adenine phosphoribosyltransferase (182 aa).

The protein belongs to the purine/pyrimidine phosphoribosyltransferase family. Homodimer.

Its subcellular location is the cytoplasm. The catalysed reaction is AMP + diphosphate = 5-phospho-alpha-D-ribose 1-diphosphate + adenine. The protein operates within purine metabolism; AMP biosynthesis via salvage pathway; AMP from adenine: step 1/1. Catalyzes a salvage reaction resulting in the formation of AMP, that is energically less costly than de novo synthesis. The protein is Adenine phosphoribosyltransferase of Streptomyces avermitilis (strain ATCC 31267 / DSM 46492 / JCM 5070 / NBRC 14893 / NCIMB 12804 / NRRL 8165 / MA-4680).